Reading from the N-terminus, the 173-residue chain is Transcription factor HES-2 (173 aa).

In terms of domain architecture, bHLH spans 13–70 (LRKSLKPLLEKRRRARINQSLSQLKGLILPLLGRENSNCSKLEKADVLEMTVRFLQEL). The region spanning 86–119 (YREGYSACVARLARVLPACRVLEPAVSARLLEHL) is the Orange domain. A disordered region spans residues 128–173 (LDGGRAGDSSGPSAPAPAPASAPEPASAPVPSPPSPPCGPGLWRPW). Residues 141-166 (APAPAPASAPEPASAPVPSPPSPPCG) are compositionally biased toward pro residues. A WRPW motif motif is present at residues 170 to 173 (WRPW).

As to quaternary structure, transcription repression requires formation of a complex with a corepressor protein of the Groucho/TLE family. Expressed in placenta, pancreatic cancer, colon cancer with RER, cervical cancer, and in head and neck tumors.

It localises to the nucleus. In terms of biological role, transcriptional repressor of genes that require a bHLH protein for their transcription. The sequence is that of Transcription factor HES-2 (HES2) from Homo sapiens (Human).